The following is a 617-amino-acid chain: Dihydroxy-acid dehydratase (617 aa).

Asp81 is a Mg(2+) binding site. Cys122 is a [2Fe-2S] cluster binding site. Mg(2+) contacts are provided by Asp123 and Lys124. Lys124 is subject to N6-carboxylysine. A [2Fe-2S] cluster-binding site is contributed by Cys197. Glu493 is a Mg(2+) binding site. The active-site Proton acceptor is the Ser519.

This sequence belongs to the IlvD/Edd family. Homodimer. It depends on [2Fe-2S] cluster as a cofactor. Mg(2+) serves as cofactor.

It carries out the reaction (2R)-2,3-dihydroxy-3-methylbutanoate = 3-methyl-2-oxobutanoate + H2O. The catalysed reaction is (2R,3R)-2,3-dihydroxy-3-methylpentanoate = (S)-3-methyl-2-oxopentanoate + H2O. The protein operates within amino-acid biosynthesis; L-isoleucine biosynthesis; L-isoleucine from 2-oxobutanoate: step 3/4. Its pathway is amino-acid biosynthesis; L-valine biosynthesis; L-valine from pyruvate: step 3/4. Functions in the biosynthesis of branched-chain amino acids. Catalyzes the dehydration of (2R,3R)-2,3-dihydroxy-3-methylpentanoate (2,3-dihydroxy-3-methylvalerate) into 2-oxo-3-methylpentanoate (2-oxo-3-methylvalerate) and of (2R)-2,3-dihydroxy-3-methylbutanoate (2,3-dihydroxyisovalerate) into 2-oxo-3-methylbutanoate (2-oxoisovalerate), the penultimate precursor to L-isoleucine and L-valine, respectively. This chain is Dihydroxy-acid dehydratase, found in Corynebacterium aurimucosum (strain ATCC 700975 / DSM 44827 / CIP 107346 / CN-1) (Corynebacterium nigricans).